The sequence spans 411 residues: Common plant regulatory factor 1 (411 aa).

Positions 1 to 14 (MGNTDDVKAVKPEK) are enriched in basic and acidic residues. Disordered stretches follow at residues 1 to 30 (MGNT…SNSH), 130 to 197 (AMSI…SSVI), and 232 to 293 (SSLE…KQAE). The span at 148-164 (TLSQSKETEGSSDGSNE) shows a compositional bias: polar residues. Residues 235–244 (ELKDSPKEHA) show a composition bias toward basic and acidic residues. Positions 249–259 (AGGQQPSTMMP) are enriched in polar residues. Basic and acidic residues predominate over residues 264–293 (LHNDRDLKRERRKQSNRESARRSRLRKQAE). A bZIP domain is found at 269-332 (DLKRERRKQS…EKLTNDNSRL (64 aa)). A basic motif region spans residues 271–290 (KRERRKQSNRESARRSRLRK). The leucine-zipper stretch occupies residues 297-332 (LAIKVDSLTAENMALKAEINRLTLTAEKLTNDNSRL). Residues 346 to 411 (DVGLGNNNEK…NPRTDAVAAG (66 aa)) form a disordered region.

Belongs to the bZIP family. As to quaternary structure, binds DNA as a dimer.

It localises to the nucleus. Its function is as follows. Binds to the G-box-like motif (5'-ACGTGGC-3') of the chalcone synthase (CHS) gene promoter. G-box and G-box-like motifs are defined in promoters of certain plant genes which are regulated by such diverse stimuli as light-induction or hormone control. The sequence is that of Common plant regulatory factor 1 (CPRF1) from Petroselinum crispum (Parsley).